The following is a 299-amino-acid chain: Transcription factor srbB (299 aa).

2 disordered regions span residues 1–33 and 81–204; these read MAYNNRPDASTAFTFDNDDRFVNQQPKGPDPLS and ISGF…NAAK. The span at 161-170 shows a compositional bias: low complexity; sequence PVTSQATTSP. Residues 188 to 199 show a composition bias toward polar residues; sequence RSLSTDSQTATG. Residues 203–216 are basic motif; the sequence is AKRAAHNIIEKRYR. One can recognise a bHLH domain in the interval 203 to 264; sequence AKRAAHNIIE…TNAIAYMQEL (62 aa). A helix-loop-helix motif region spans residues 217–264; sequence TNMNAKFVALEKAMSGSGVQKPTKGGSGPASLKKSEILTNAIAYMQEL. Residues 254–281 are a coiled coil; sequence LTNAIAYMQELQDQNAALQKELALLKQN.

The protein localises to the nucleus. Key transcription factors critical for hypoxia adaptation and virulence. Plays a major role in regulation of heme biosynthesis and carbohydrate metabolism early in the response to hypoxia. This is Transcription factor srbB from Aspergillus fumigatus (strain ATCC MYA-4609 / CBS 101355 / FGSC A1100 / Af293) (Neosartorya fumigata).